The chain runs to 103 residues: uncharacterized protein (103 aa).

A signal peptide spans 1–22 (MFRPFLNSLMLGSLFFPFIAIA).

The protein to the N-terminal of the FimA/PapA family of fimbria proteins.

This is an uncharacterized protein from Escherichia coli (strain K12).